Here is a 245-residue protein sequence, read N- to C-terminus: 14-3-3 protein zeta (245 aa).

The protein belongs to the 14-3-3 family. In terms of assembly, homodimer.

The protein localises to the cytoplasm. In terms of biological role, adapter protein implicated in the regulation of a large spectrum of both general and specialized signaling pathways. Binds to a large number of partners, usually by recognition of a phosphoserine or phosphothreonine motif. Binding generally results in the modulation of the activity of the binding partner. In Xenopus tropicalis (Western clawed frog), this protein is 14-3-3 protein zeta (ywhaz).